The chain runs to 506 residues: Deoxyguanosinetriphosphate triphosphohydrolase (506 aa).

The HD domain occupies 66–274; sequence RLTHSLEVQQ…MEAADDISYC (209 aa).

The protein belongs to the dGTPase family. Type 1 subfamily. Homotetramer. Mg(2+) is required as a cofactor.

The enzyme catalyses dGTP + H2O = 2'-deoxyguanosine + triphosphate + H(+). In terms of biological role, dGTPase preferentially hydrolyzes dGTP over the other canonical NTPs. This is Deoxyguanosinetriphosphate triphosphohydrolase from Yersinia pestis bv. Antiqua (strain Antiqua).